A 23-amino-acid chain; its full sequence is Magainin-BM2 (23 aa).

As to expression, expressed by the skin glands.

The protein resides in the secreted. In terms of biological role, antimicrobial peptide. This chain is Magainin-BM2, found in Xenopus boumbaensis (Mawa clawed frog).